A 472-amino-acid polypeptide reads, in one-letter code: MFEVVIGLEVHTQLNTKTKIFCSCATSFGEAPNTNVCPTCLALPGALPVLNEEAVKKAIAFGKAVNATINKKSVFNRKNYFYPDLPKAYQISQFDIPIVEKGELFINVKGENKRIGITRAHLEEDAGKNIHENNFSKVDLNRAGTPLLEIVSEPELRSSDEAVAYLKKLHSIIRFLDISDANMQEGSFRCDANVSIRPKGDTKLYTRVEIKNLNSFRFIQKAIEYEVKRQSEAWEDGTYEQEVVQETRLFDTTNLVTRSMRGKEEAAEYRYFPDPDLLPVLLKDEFLDIKIPELPDEKKARFIDELGIKESDAEVLISSLEMSRFFESLISQNLNSKLCVNWLNTELMGLLKGELTIENSPVDAQKLGVLIKRIEDGTISAKAAKDVLAFVFENTSVEIDEAIEKLGLKQVSDDSAIEAVIEQILNANADKVAEYKSGKDKLFGFFVGQTMKEGKGAFNPAKVNEILKTKLG.

The protein belongs to the GatB/GatE family. GatB subfamily. In terms of assembly, heterotrimer of A, B and C subunits.

The enzyme catalyses L-glutamyl-tRNA(Gln) + L-glutamine + ATP + H2O = L-glutaminyl-tRNA(Gln) + L-glutamate + ADP + phosphate + H(+). It carries out the reaction L-aspartyl-tRNA(Asn) + L-glutamine + ATP + H2O = L-asparaginyl-tRNA(Asn) + L-glutamate + ADP + phosphate + 2 H(+). Functionally, allows the formation of correctly charged Asn-tRNA(Asn) or Gln-tRNA(Gln) through the transamidation of misacylated Asp-tRNA(Asn) or Glu-tRNA(Gln) in organisms which lack either or both of asparaginyl-tRNA or glutaminyl-tRNA synthetases. The reaction takes place in the presence of glutamine and ATP through an activated phospho-Asp-tRNA(Asn) or phospho-Glu-tRNA(Gln). The polypeptide is Aspartyl/glutamyl-tRNA(Asn/Gln) amidotransferase subunit B (Campylobacter jejuni subsp. jejuni serotype O:6 (strain 81116 / NCTC 11828)).